The sequence spans 585 residues: Glutamate decarboxylase 2 (585 aa).

Residues 1–25 (MASPGSGFWSFGSEDGSGDPENPST) form a disordered region. 4 positions are modified to phosphoserine: Ser3, Ser6, Ser10, and Ser13. Residues Cys30 and Cys45 are each lipidated (S-palmitoyl cysteine). A substrate-binding site is contributed by 181–183 (QLS). Lys396 bears the N6-(pyridoxal phosphate)lysine mark. Residue Arg558 participates in substrate binding.

It belongs to the group II decarboxylase family. Homodimer. It depends on pyridoxal 5'-phosphate as a cofactor. Post-translationally, phosphorylated; which does not affect kinetic parameters or subcellular location. Palmitoylated; which is required for presynaptic clustering.

The protein resides in the cytoplasm. It localises to the cytosol. It is found in the cytoplasmic vesicle. The protein localises to the presynaptic cell membrane. Its subcellular location is the golgi apparatus membrane. It carries out the reaction L-glutamate + H(+) = 4-aminobutanoate + CO2. Catalyzes the production of GABA. The chain is Glutamate decarboxylase 2 (GAD2) from Canis lupus familiaris (Dog).